The primary structure comprises 462 residues: Signal recognition particle protein (462 aa).

Residues 107–114, 190–194, and 248–251 contribute to the GTP site; these read GLQGAGKT, DTAGR, and TKVD.

This sequence belongs to the GTP-binding SRP family. SRP54 subfamily. Part of the signal recognition particle protein translocation system, which is composed of SRP and FtsY. SRP is a ribonucleoprotein composed of Ffh and a 4.5S RNA molecule.

The protein localises to the cytoplasm. It carries out the reaction GTP + H2O = GDP + phosphate + H(+). In terms of biological role, involved in targeting and insertion of nascent membrane proteins into the cytoplasmic membrane. Binds to the hydrophobic signal sequence of the ribosome-nascent chain (RNC) as it emerges from the ribosomes. The SRP-RNC complex is then targeted to the cytoplasmic membrane where it interacts with the SRP receptor FtsY. Interaction with FtsY leads to the transfer of the RNC complex to the Sec translocase for insertion into the membrane, the hydrolysis of GTP by both Ffh and FtsY, and the dissociation of the SRP-FtsY complex into the individual components. In Haemophilus influenzae (strain ATCC 51907 / DSM 11121 / KW20 / Rd), this protein is Signal recognition particle protein.